The sequence spans 431 residues: L-cysteine:1D-myo-inositol 2-amino-2-deoxy-alpha-D-glucopyranoside ligase (431 aa).

Cys44 provides a ligand contact to Zn(2+). Residues 44–47 (CGIT), Thr59, and 82–84 (NVT) each bind L-cysteinyl-5'-AMP. Positions 46–56 (ITPYDATHLGH) match the 'HIGH' region motif. Positions 187-192 (ERGGDP) match the 'ERGGDP' region motif. L-cysteinyl-5'-AMP is bound at residue Trp227. Residue Cys231 coordinates Zn(2+). 249–251 (GND) contacts L-cysteinyl-5'-AMP. Residue His256 coordinates Zn(2+). An L-cysteinyl-5'-AMP-binding site is contributed by Ile283. The 'KMSKS' region motif lies at 289-293 (KMSKS).

Belongs to the class-I aminoacyl-tRNA synthetase family. MshC subfamily. As to quaternary structure, monomer. The cofactor is Zn(2+).

It catalyses the reaction 1D-myo-inositol 2-amino-2-deoxy-alpha-D-glucopyranoside + L-cysteine + ATP = 1D-myo-inositol 2-(L-cysteinylamino)-2-deoxy-alpha-D-glucopyranoside + AMP + diphosphate + H(+). Functionally, catalyzes the ATP-dependent condensation of GlcN-Ins and L-cysteine to form L-Cys-GlcN-Ins. This is L-cysteine:1D-myo-inositol 2-amino-2-deoxy-alpha-D-glucopyranoside ligase from Stackebrandtia nassauensis (strain DSM 44728 / CIP 108903 / NRRL B-16338 / NBRC 102104 / LLR-40K-21).